We begin with the raw amino-acid sequence, 790 residues long: N-methylputrescine oxidase 1, peroxisomal (790 aa).

A disordered region spans residues 1–23 (MATTKQKVTAPSPSPSSSTASCC). Over residues 9-23 (TAPSPSPSSSTASCC) the composition is skewed to low complexity. 423–434 (AFDAGEDGLGKN) is a binding site for substrate. Catalysis depends on Asp-425, which acts as the Proton acceptor. Cys-444 and Cys-470 form a disulfide bridge. Substrate is bound at residue 506 to 511 (VANYEY). Catalysis depends on Tyr-509, which acts as the Schiff-base intermediate with substrate; via topaquinone. Tyr-509 is modified (2',4',5'-topaquinone). Cu cation contacts are provided by His-559 and His-561. Positions 714 and 715 each coordinate Mn(2+). Residue His-725 coordinates Cu cation.

The protein belongs to the copper/topaquinone oxidase family. As to quaternary structure, homodimer. Cu cation is required as a cofactor. Requires Zn(2+) as cofactor. It depends on L-topaquinone as a cofactor. In terms of processing, topaquinone (TPQ) is generated by copper-dependent autoxidation of a specific tyrosyl residue. In terms of tissue distribution, mainly expressed in roots, and, to a lower extent, in stems.

Its subcellular location is the peroxisome. It carries out the reaction a primary methyl amine + O2 + H2O = an aldehyde + H2O2 + NH4(+). The catalysed reaction is N-methylputrescine + O2 + H2O = 4-methylaminobutanal + H2O2 + NH4(+). Its pathway is alkaloid biosynthesis; nicotine biosynthesis. In terms of biological role, involved in the biosynthesis of pyridine alkaloid natural products, leading mainly to the production of anabasine, anatabine, nicotine and nornicotine, effective deterrents against herbivores with antiparasitic and pesticide properties (neurotoxins); nornicotine serves as the precursor in the synthesis of the carcinogen compound N'-nitrosonornicotine (NNN). Amine oxidase which mediates the deamination of N-methylputrescine to produce 4-methylaminobutanal. Oxidizes preferentially N-methylated amines. The chain is N-methylputrescine oxidase 1, peroxisomal from Nicotiana tabacum (Common tobacco).